A 375-amino-acid chain; its full sequence is 23S rRNA (uracil(747)-C(5))-methyltransferase RlmC (375 aa).

[4Fe-4S] cluster-binding residues include Cys-3, Cys-11, Cys-14, and Cys-87. The S-adenosyl-L-methionine site is built by Gln-212, Phe-241, Glu-262, and Asn-307. Catalysis depends on Cys-334, which acts as the Nucleophile.

The protein belongs to the class I-like SAM-binding methyltransferase superfamily. RNA M5U methyltransferase family. RlmC subfamily.

The enzyme catalyses uridine(747) in 23S rRNA + S-adenosyl-L-methionine = 5-methyluridine(747) in 23S rRNA + S-adenosyl-L-homocysteine + H(+). In terms of biological role, catalyzes the formation of 5-methyl-uridine at position 747 (m5U747) in 23S rRNA. The polypeptide is 23S rRNA (uracil(747)-C(5))-methyltransferase RlmC (Escherichia coli O157:H7).